The chain runs to 50 residues: Sperm protamine P1 (50 aa).

Belongs to the protamine P1 family. As to expression, testis.

The protein localises to the nucleus. It is found in the chromosome. Protamines substitute for histones in the chromatin of sperm during the haploid phase of spermatogenesis. They compact sperm DNA into a highly condensed, stable and inactive complex. This is Sperm protamine P1 (PRM1) from Natalus stramineus (Mexican funnel-eared bat).